Consider the following 235-residue polypeptide: UPF0758 protein CD630_11440 (235 aa).

In terms of domain architecture, MPN spans 113–235; that stretch reads KIMNPWDIQR…YFSFKENMII (123 aa). Zn(2+) contacts are provided by His184, His186, and Asp197. The short motif at 184–197 is the JAMM motif element; it reads HNHPSGSVEPSRED.

Belongs to the UPF0758 family.

The polypeptide is UPF0758 protein CD630_11440 (Clostridioides difficile (strain 630) (Peptoclostridium difficile)).